Reading from the N-terminus, the 305-residue chain is Probable pyridoxal 5'-phosphate synthase subunit pdx1 (305 aa).

D-ribose 5-phosphate is bound at residue Asp33. The active-site Schiff-base intermediate with D-ribose 5-phosphate is Lys90. Position 162 (Gly162) interacts with D-ribose 5-phosphate. Residue Arg174 coordinates D-glyceraldehyde 3-phosphate. D-ribose 5-phosphate contacts are provided by residues Gly223 and 244–245 (GS).

Belongs to the PdxS/SNZ family. In terms of assembly, homohexamer.

The catalysed reaction is aldehydo-D-ribose 5-phosphate + D-glyceraldehyde 3-phosphate + L-glutamine = pyridoxal 5'-phosphate + L-glutamate + phosphate + 3 H2O + H(+). It participates in cofactor biosynthesis; pyridoxal 5'-phosphate biosynthesis. Its function is as follows. Catalyzes the formation of pyridoxal 5'-phosphate from ribose 5-phosphate (RBP), glyceraldehyde 3-phosphate (G3P) and ammonia. The ammonia is provided by pdx2. Can also use ribulose 5-phosphate and dihydroxyacetone phosphate as substrates, resulting from enzyme-catalyzed isomerization of RBP and G3P, respectively. The chain is Probable pyridoxal 5'-phosphate synthase subunit pdx1 (pdx1) from Dictyostelium discoideum (Social amoeba).